A 375-amino-acid chain; its full sequence is Circadian-associated transcriptional repressor (375 aa).

Low complexity predominate over residues 1-32; it reads MDSPSSVSSYSSSSLSPSFSTSSVNSDFSFPS. 3 disordered regions span residues 1–102, 192–218, and 351–375; these read MDSP…LNTQ, KSSS…AASP, and DREM…DPQP. Over residues 33 to 46 the composition is skewed to basic and acidic residues; the sequence is DNEREGKGTHELRP.

Interacts with BMAL1, PER2, CRY2, BHLHE41, HDAC1 NR3C1.

Its subcellular location is the nucleus. It is found in the PML body. In terms of biological role, transcriptional repressor which forms a negative regulatory component of the circadian clock and acts independently of the circadian transcriptional repressors: CRY1, CRY2 and BHLHE41. In a histone deacetylase-dependent manner represses the transcriptional activator activity of the CLOCK-BMAL1 heterodimer. Abrogates the interaction of BMAL1 with the transcriptional coactivator CREBBP and can repress the histone acetyl-transferase activity of the CLOCK-BMAL1 heterodimer, reducing histone acetylation of its target genes. Rhythmically binds the E-box elements (5'-CACGTG-3') on circadian gene promoters and its occupancy shows circadian oscillation antiphasic to BMAL1. Interacts with the glucocorticoid receptor (NR3C1) and contributes to the repressive function in the glucocorticoid response. This is Circadian-associated transcriptional repressor (Ciart) from Mus musculus (Mouse).